The chain runs to 178 residues: Adenine phosphoribosyltransferase (178 aa).

Belongs to the purine/pyrimidine phosphoribosyltransferase family. In terms of assembly, homodimer.

It localises to the cytoplasm. The catalysed reaction is AMP + diphosphate = 5-phospho-alpha-D-ribose 1-diphosphate + adenine. It functions in the pathway purine metabolism; AMP biosynthesis via salvage pathway; AMP from adenine: step 1/1. Its function is as follows. Catalyzes a salvage reaction resulting in the formation of AMP, that is energically less costly than de novo synthesis. The sequence is that of Adenine phosphoribosyltransferase from Cereibacter sphaeroides (strain ATCC 17029 / ATH 2.4.9) (Rhodobacter sphaeroides).